Consider the following 251-residue polypeptide: 5-oxoprolinase subunit A (251 aa).

The protein belongs to the LamB/PxpA family. Forms a complex composed of PxpA, PxpB and PxpC.

It carries out the reaction 5-oxo-L-proline + ATP + 2 H2O = L-glutamate + ADP + phosphate + H(+). Catalyzes the cleavage of 5-oxoproline to form L-glutamate coupled to the hydrolysis of ATP to ADP and inorganic phosphate. This Tolumonas auensis (strain DSM 9187 / NBRC 110442 / TA 4) protein is 5-oxoprolinase subunit A.